A 390-amino-acid polypeptide reads, in one-letter code: Alanine racemase (390 aa).

Lys-46 functions as the Proton acceptor; specific for D-alanine in the catalytic mechanism. N6-(pyridoxal phosphate)lysine is present on Lys-46. Arg-144 lines the substrate pocket. Tyr-275 acts as the Proton acceptor; specific for L-alanine in catalysis. Position 323 (Met-323) interacts with substrate.

This sequence belongs to the alanine racemase family. It depends on pyridoxal 5'-phosphate as a cofactor.

The catalysed reaction is L-alanine = D-alanine. It participates in amino-acid biosynthesis; D-alanine biosynthesis; D-alanine from L-alanine: step 1/1. In terms of biological role, catalyzes the interconversion of L-alanine and D-alanine. May also act on other amino acids. This Mycolicibacterium vanbaalenii (strain DSM 7251 / JCM 13017 / BCRC 16820 / KCTC 9966 / NRRL B-24157 / PYR-1) (Mycobacterium vanbaalenii) protein is Alanine racemase (alr).